The chain runs to 286 residues: Lipoyl synthase (286 aa).

The [4Fe-4S] cluster site is built by C34, C39, C45, C60, C64, C67, and S271. The Radical SAM core domain occupies W46–S260.

The protein belongs to the radical SAM superfamily. Lipoyl synthase family. [4Fe-4S] cluster is required as a cofactor.

It is found in the cytoplasm. The enzyme catalyses [[Fe-S] cluster scaffold protein carrying a second [4Fe-4S](2+) cluster] + N(6)-octanoyl-L-lysyl-[protein] + 2 oxidized [2Fe-2S]-[ferredoxin] + 2 S-adenosyl-L-methionine + 4 H(+) = [[Fe-S] cluster scaffold protein] + N(6)-[(R)-dihydrolipoyl]-L-lysyl-[protein] + 4 Fe(3+) + 2 hydrogen sulfide + 2 5'-deoxyadenosine + 2 L-methionine + 2 reduced [2Fe-2S]-[ferredoxin]. The protein operates within protein modification; protein lipoylation via endogenous pathway; protein N(6)-(lipoyl)lysine from octanoyl-[acyl-carrier-protein]: step 2/2. In terms of biological role, catalyzes the radical-mediated insertion of two sulfur atoms into the C-6 and C-8 positions of the octanoyl moiety bound to the lipoyl domains of lipoate-dependent enzymes, thereby converting the octanoylated domains into lipoylated derivatives. This chain is Lipoyl synthase, found in Picrophilus torridus (strain ATCC 700027 / DSM 9790 / JCM 10055 / NBRC 100828 / KAW 2/3).